The following is a 116-amino-acid chain: NADH-quinone oxidoreductase subunit A (116 aa).

The next 3 membrane-spanning stretches (helical) occupy residues 3–23 (FTFL…VIAL), 61–81 (FAIL…WAVV), and 88–108 (QGLV…AYAW).

The protein belongs to the complex I subunit 3 family. NDH-1 is composed of 14 different subunits. Subunits NuoA, H, J, K, L, M, N constitute the membrane sector of the complex.

It localises to the cell inner membrane. It catalyses the reaction a quinone + NADH + 5 H(+)(in) = a quinol + NAD(+) + 4 H(+)(out). In terms of biological role, NDH-1 shuttles electrons from NADH, via FMN and iron-sulfur (Fe-S) centers, to quinones in the respiratory chain. The immediate electron acceptor for the enzyme in this species is believed to be a menaquinone. Couples the redox reaction to proton translocation (for every two electrons transferred, four hydrogen ions are translocated across the cytoplasmic membrane), and thus conserves the redox energy in a proton gradient. This chain is NADH-quinone oxidoreductase subunit A, found in Bacteroides thetaiotaomicron (strain ATCC 29148 / DSM 2079 / JCM 5827 / CCUG 10774 / NCTC 10582 / VPI-5482 / E50).